The chain runs to 266 residues: Undecaprenyl-diphosphatase (266 aa).

The next 8 helical transmembrane spans lie at 1 to 21 (MDTF…FLPI), 39 to 59 (QGLS…VIYF), 87 to 107 (WWII…KDFI), 111 to 131 (LRSA…LWWA), 149 to 169 (ALLI…RSGA), 183 to 203 (AAAR…AILV), 218 to 238 (ALTL…HYFL), and 246 to 266 (MTPF…FIFL).

This sequence belongs to the UppP family.

It localises to the cell inner membrane. The catalysed reaction is di-trans,octa-cis-undecaprenyl diphosphate + H2O = di-trans,octa-cis-undecaprenyl phosphate + phosphate + H(+). In terms of biological role, catalyzes the dephosphorylation of undecaprenyl diphosphate (UPP). Confers resistance to bacitracin. In Shewanella putrefaciens (strain CN-32 / ATCC BAA-453), this protein is Undecaprenyl-diphosphatase.